The sequence spans 227 residues: UPF0758 protein llmg_1515 (227 aa).

An MPN domain is found at 103–225 (QVLSSKEYGM…YYSFRERDSN (123 aa)). Zn(2+) is bound by residues His174, His176, and Asp187. The short motif at 174 to 187 (HNHPSGNLQPSQAD) is the JAMM motif element.

It belongs to the UPF0758 family.

This Lactococcus lactis subsp. cremoris (strain MG1363) protein is UPF0758 protein llmg_1515.